We begin with the raw amino-acid sequence, 329 residues long: Transcription factor MYB2 (329 aa).

HTH myb-type domains lie at 17-69 (GGDL…LNYL) and 70-124 (RPDL…QKHA). 2 consecutive DNA-binding regions (H-T-H motif) follow at residues 45–69 (WNSL…LNYL) and 97–120 (WSKI…RTRV). Low complexity-rich tracts occupy residues 155–166 (AAAGQQQQQEGG) and 217–235 (LSST…GAGA). Disordered regions lie at residues 155–189 (AAAG…PELP) and 206–242 (GAQS…WPTQ).

In terms of tissue distribution, highly expressed in leaves. Expressed in roots and shoots. Expressed at low levels in flowers.

The protein resides in the nucleus. Functionally, transcription factor involved in abiotic stress responses. Plays a regulatory role in tolerance to salt, cold, and drought stresses. Positively regulates the expression of genes involved in proline synthesis and transport, and genes involved in reactive oxygen species (ROS) scavenging such as peroxidase, superoxide dismutase and catalase during salt stress. Transactivates stress-related genes, including LEA3, RAB16A and DREB2A during salt stress. The polypeptide is Transcription factor MYB2 (Oryza sativa subsp. japonica (Rice)).